Here is a 564-residue protein sequence, read N- to C-terminus: Phenylalanine--tRNA ligase beta subunit (564 aa).

The region spanning 286 to 362 is the B5 domain; that stretch reads YFQNTLEVSV…IGRGLDSFKP (77 aa). Mg(2+) contacts are provided by Asp-340, Asp-346, Glu-349, and Glu-350.

Belongs to the phenylalanyl-tRNA synthetase beta subunit family. Type 2 subfamily. As to quaternary structure, tetramer of two alpha and two beta subunits. The cofactor is Mg(2+).

The protein localises to the cytoplasm. The catalysed reaction is tRNA(Phe) + L-phenylalanine + ATP = L-phenylalanyl-tRNA(Phe) + AMP + diphosphate + H(+). In Borrelia hermsii (strain HS1 / DAH), this protein is Phenylalanine--tRNA ligase beta subunit.